Reading from the N-terminus, the 607-residue chain is Probable LRR receptor-like serine/threonine-protein kinase At5g65240 (607 aa).

Residues Met1–Gly24 form the signal peptide. Residues Asp25–Gly219 lie on the Extracellular side of the membrane. N-linked (GlcNAc...) asparagine glycans are attached at residues Asn74 and Asn110. LRR repeat units lie at residues Leu87–Leu111, Ser112–Leu135, Asn137–Leu159, and Ser160–Ile183. Residues Asn149, Asn171, Asn187, and Asn192 are each glycosylated (N-linked (GlcNAc...) asparagine). Residues Ile220–Phe240 traverse the membrane as a helical segment. Residues Cys241 to Arg607 lie on the Cytoplasmic side of the membrane. The residue at position 281 (Thr281) is a Phosphothreonine. The 285-residue stretch at Phe284–Glu568 folds into the Protein kinase domain. Position 290–298 (Leu290–Val298) interacts with ATP. Thr307 carries the post-translational modification Phosphothreonine. An ATP-binding site is contributed by Lys312. The residue at position 365 (Ser365) is a Phosphoserine. Catalysis depends on Asp411, which acts as the Proton acceptor. Phosphothreonine is present on residues Thr444, Thr445, and Thr450. Ser460 is modified (phosphoserine). Position 461 is a phosphothreonine (Thr461). At Ser465 the chain carries Phosphoserine. The residue at position 541 (Thr541) is a Phosphothreonine.

This sequence belongs to the protein kinase superfamily. Ser/Thr protein kinase family.

It is found in the cell membrane. The catalysed reaction is L-seryl-[protein] + ATP = O-phospho-L-seryl-[protein] + ADP + H(+). It carries out the reaction L-threonyl-[protein] + ATP = O-phospho-L-threonyl-[protein] + ADP + H(+). This Arabidopsis thaliana (Mouse-ear cress) protein is Probable LRR receptor-like serine/threonine-protein kinase At5g65240.